Reading from the N-terminus, the 449-residue chain is MSHITFDYSKVLESFAGQHEIDFLQGQVTEADKLLREGTGPGSDFLGWLDLPENYDKEEFARILTAAEKIKSDSEVLVVIGIGGSYLGAKAAIDFLNHHFANLQTAKERKAPQILYAGNSISSTYLADLVEYVQDKEFSVNVISKSGTTTEPAIAFRVFKELLVKKYGQEEANKRIYATTDKVKGAVKVEADANNWETFVVPDNVGGRFSVLTAVGLLPIAASGADITALMEGANAARKDLSSDKISENIAYQYAAVRNVLYRKGYITEILANYEPSLQYFGEWWKQLAGESEGKDQKGIYPTSANFSTDLHSLGQFIQEGYRNLFETVIRVDKPRKNVIIPELAEDLDGLGYLQGKDVDFVNKKATDGVLLAHTDGGVPNMFVTLPAQDEFTLGYTIYFFELAIAVSGYMNAVNPFDQPGVEAYKRNMFALLGKPGFEALSAELNARL.

Glutamate 291 acts as the Proton donor in catalysis. Residues histidine 312 and lysine 426 contribute to the active site.

This sequence belongs to the GPI family.

It localises to the cytoplasm. The catalysed reaction is alpha-D-glucose 6-phosphate = beta-D-fructose 6-phosphate. It functions in the pathway carbohydrate biosynthesis; gluconeogenesis. It participates in carbohydrate degradation; glycolysis; D-glyceraldehyde 3-phosphate and glycerone phosphate from D-glucose: step 2/4. Functionally, catalyzes the reversible isomerization of glucose-6-phosphate to fructose-6-phosphate. This chain is Glucose-6-phosphate isomerase, found in Streptococcus pyogenes serotype M12 (strain MGAS2096).